The primary structure comprises 317 residues: MSGQGPQRRLLGSPNATSPTTPHFKLAANQTGPRCLEVSIPNGLFLSLGLVSVVENVLVVAAIAKNRNLHSPMYYFIGCLAVSDLLVSVTNVLETAVMLLVEAGALAAQAAVVQQLDDIIDVLICGSMVSSLCFLGAIAVDRYLSIFYALRYHSIVTLPRAWRAISAIWVASVLSSTLFIAYYNHTAVLLCLVSFFVAMLVLMAVLYVHMLARARQHARGIARLRKRQHSVHQGFGLKGAATLTILLGIFFLCWGPFFLHLSLMVLCPQHPICGCVFQNFNLFLTLIICNSIIDPFIYAFRSQELRKTLQEVVLCSW.

The disordered stretch occupies residues 1–23 (MSGQGPQRRLLGSPNATSPTTPH). Over 1 to 37 (MSGQGPQRRLLGSPNATSPTTPHFKLAANQTGPRCLE) the chain is Extracellular. A glycan (N-linked (GlcNAc...) asparagine) is linked at N29. The helical transmembrane segment at 38 to 63 (VSIPNGLFLSLGLVSVVENVLVVAAI) threads the bilayer. Residues 64–72 (AKNRNLHSP) are Cytoplasmic-facing. The chain crosses the membrane as a helical span at residues 73 to 93 (MYYFIGCLAVSDLLVSVTNVL). The Extracellular portion of the chain corresponds to 94–118 (ETAVMLLVEAGALAAQAAVVQQLDD). The chain crosses the membrane as a helical span at residues 119-140 (IIDVLICGSMVSSLCFLGAIAV). The Cytoplasmic segment spans residues 141-163 (DRYLSIFYALRYHSIVTLPRAWR). The chain crosses the membrane as a helical span at residues 164 to 183 (AISAIWVASVLSSTLFIAYY). The Extracellular portion of the chain corresponds to 184–191 (NHTAVLLC). The chain crosses the membrane as a helical span at residues 192–211 (LVSFFVAMLVLMAVLYVHML). Residues 212–240 (ARARQHARGIARLRKRQHSVHQGFGLKGA) lie on the Cytoplasmic side of the membrane. A helical membrane pass occupies residues 241–266 (ATLTILLGIFFLCWGPFFLHLSLMVL). The Extracellular portion of the chain corresponds to 267 to 279 (CPQHPICGCVFQN). The helical transmembrane segment at 280–300 (FNLFLTLIICNSIIDPFIYAF) threads the bilayer. Residues 301–317 (RSQELRKTLQEVVLCSW) are Cytoplasmic-facing. The S-palmitoyl cysteine moiety is linked to residue C315.

Belongs to the G-protein coupled receptor 1 family. Interacts with MGRN1, but does not undergo MGRN1-mediated ubiquitination; this interaction competes with GNAS-binding and thus inhibits agonist-induced cAMP production. Interacts with OPN3; the interaction results in a decrease in MC1R-mediated cAMP signaling and ultimately a decrease in melanin production in melanocytes.

The protein resides in the cell membrane. In terms of biological role, receptor for MSH (alpha, beta and gamma) and ACTH. The activity of this receptor is mediated by G proteins which activate adenylate cyclase. Mediates melanogenesis, the production of eumelanin (black/brown) and phaeomelanin (red/yellow), via regulation of cAMP signaling in melanocytes. The polypeptide is Melanocyte-stimulating hormone receptor (MC1R) (Vulpes vulpes (Red fox)).